The following is a 351-amino-acid chain: MRETESNNKVLLGMSGGTDSSVAALLLQDAGYEVTGITFRFYEKENDTEYLEDARALCERLNIPHLTYDVRDTFRKTIIDYFINEYMAGHTPVPCTLCNNYLKWPLLKKISDEMGIYHFATGHYVRRRFINGCYHITTGVDPDKDQSFFLWGLPQEILQRMLLPMGNLTKARVREIAAERGFLKAAHKRDSLGVCFCPMDYRTFLHKELPEGSILPGKFFDEMGNFIARHKGYPFYTIGQRRGLGIDLNRAVFVKEIIPAENKVILSDLKALEKTEMRLKEWHITNPALLLNKDDIIVKIRYRKQANRCTVTLQPDNTLHVQLHEPLTAIAPGQAAAFYRDDVVLGGGIII.

ATP-binding positions include 13–20 and phenylalanine 39; that span reads GMSGGTDS. Residue cysteine 98 is the Nucleophile of the active site. A disulfide bond links cysteine 98 and cysteine 195. Glycine 122 lines the ATP pocket. The tract at residues 144 to 146 is interaction with tRNA; that stretch reads KDQ. Cysteine 195 acts as the Cysteine persulfide intermediate in catalysis. The tract at residues 301 to 302 is interaction with tRNA; sequence RY.

This sequence belongs to the MnmA/TRMU family.

It is found in the cytoplasm. It carries out the reaction S-sulfanyl-L-cysteinyl-[protein] + uridine(34) in tRNA + AH2 + ATP = 2-thiouridine(34) in tRNA + L-cysteinyl-[protein] + A + AMP + diphosphate + H(+). Functionally, catalyzes the 2-thiolation of uridine at the wobble position (U34) of tRNA, leading to the formation of s(2)U34. In Phocaeicola vulgatus (strain ATCC 8482 / DSM 1447 / JCM 5826 / CCUG 4940 / NBRC 14291 / NCTC 11154) (Bacteroides vulgatus), this protein is tRNA-specific 2-thiouridylase MnmA 2.